A 361-amino-acid polypeptide reads, in one-letter code: Mitogen-activated protein kinase 14A (361 aa).

Residues 25-309 (YQNLSPVGSG…AAEALAHPYF (285 aa)) form the Protein kinase domain. ATP contacts are provided by residues 31–39 (VGSGAYGTV) and Lys-54. The Proton acceptor role is filled by Asp-151. Residue Thr-181 is modified to Phosphothreonine; by MAP2K6. The TXY signature appears at 181–183 (TGY). Residue Tyr-183 is modified to Phosphotyrosine; by MAP2K6.

The protein belongs to the protein kinase superfamily. CMGC Ser/Thr protein kinase family. MAP kinase subfamily. Mg(2+) serves as cofactor. Post-translationally, dually phosphorylated on Thr-181 and Tyr-183, which activates the enzyme. Exclusively expressed in the ovary.

The protein resides in the cytoplasm. It localises to the nucleus. The catalysed reaction is L-seryl-[protein] + ATP = O-phospho-L-seryl-[protein] + ADP + H(+). The enzyme catalyses L-threonyl-[protein] + ATP = O-phospho-L-threonyl-[protein] + ADP + H(+). With respect to regulation, activated by threonine and tyrosine phosphorylation by the dual specificity kinase, MKK6. Serine/threonine kinase which acts as an essential component of the MAP kinase signal transduction pathway. Mapk14a is one of the four p38 MAPKs which play an important role in the cascades of cellular responses evoked by extracellular stimuli such as pro-inflammatory cytokines or physical stress leading to direct activation of transcription factors. Accordingly, p38 MAPKs phosphorylate a broad range of proteins and it has been estimated that they may have approximately 200 to 300 substrates each. Some of the targets are downstream kinases which are activated through phosphorylation and further phosphorylate additional targets. The chain is Mitogen-activated protein kinase 14A (mapk14a) from Cyprinus carpio (Common carp).